The following is a 254-amino-acid chain: Citrate synthase-lysine N-methyltransferase CSKMT, mitochondrial (254 aa).

A mitochondrion-targeting transit peptide spans 1–45; it reads MLLNRFLVPLRSLQKLTQARRWHQTSLINDLVVNMDKKAMWDRFY.

It belongs to the methyltransferase superfamily.

It localises to the mitochondrion. The enzyme catalyses L-lysyl-[citrate synthase] + S-adenosyl-L-methionine = N(6)-methyl-L-lysyl-[citrate synthase] + S-adenosyl-L-homocysteine + H(+). It carries out the reaction N(6)-methyl-L-lysyl-[citrate synthase] + S-adenosyl-L-methionine = N(6),N(6)-dimethyl-L-lysyl-[citrate synthase] + S-adenosyl-L-homocysteine + H(+). It catalyses the reaction N(6),N(6)-dimethyl-L-lysyl-[citrate synthase] + S-adenosyl-L-methionine = N(6),N(6),N(6)-trimethyl-L-lysyl-[citrate synthase] + S-adenosyl-L-homocysteine + H(+). With respect to regulation, citrate synthase-lysine methyltransferase activity is inhibited by S-adenosylhomocysteine (AdoHcy) and oxaloacetate (OAA). Protein-lysine methyltransferase that selectively trimethylates citrate synthase (CS) in mitochondria. Seems to conduct trimethylation in a highly distributive manner rather than in a processive manner, and thus introduces a single methyl group per binding event. The chain is Citrate synthase-lysine N-methyltransferase CSKMT, mitochondrial from Danio rerio (Zebrafish).